Consider the following 1957-residue polypeptide: Chromatin modification-related protein EAF1 A (1957 aa).

Disordered regions lie at residues 108–208 (ASPH…TDLV), 261–287 (NRVSSNSLNTKVDGEPVVRESTAGSKT), 323–373 (GGSP…SHAN), and 449–469 (NQSHRSTAEMQTKEKSSETEK). The segment covering 140–151 (SENKSVEGERNL) has biased composition (basic and acidic residues). 3 stretches are compositionally biased toward polar residues: residues 261-270 (NRVSSNSLNT), 333-342 (GQKNSSTQLN), and 355-372 (TNRGATGTNGLESESSHA). Residues 563–641 (CGTAPVEVRE…LSNAILQFWS (79 aa)) form the HSA domain. Disordered regions lie at residues 833 to 909 (GSNS…AVQK) and 928 to 950 (AETSGRPKKKKKTHQGSAYDQTW). A compositionally biased stretch (polar residues) spans 884–898 (TDASSGDTSSFQDEY). One can recognise an SANT domain in the interval 1049–1105 (SGNPWSLFEDQALVVLVHDMGPNWELISDAMNSTLKIKCIYRNPTECKDRHKILMDK). Disordered regions lie at residues 1107-1131 (AGDGADSAEDSGNSQSYPSTLPGIP), 1282-1314 (TPVLPTSGAHPSTPGSSGVVLSNNLPTTSGLQS), 1344-1367 (LSGRNLQQPSLSTPAAVSGSDRGH), 1449-1644 (QGNS…QQLN), 1687-1768 (PVRP…IAPA), 1804-1840 (ELSKKSQAERMPRVPQSVTNTTQTVSMGTTKGMPQAS), and 1876-1957 (SSNT…TKVE). Polar residues-rich tracts occupy residues 1116 to 1125 (DSGNSQSYPS), 1290 to 1314 (AHPSTPGSSGVVLSNNLPTTSGLQS), 1344 to 1358 (LSGRNLQQPSLSTPA), 1459 to 1472 (SNLSSGFTNQTTPV), 1479 to 1492 (LSQQHQMSPQSHVL), and 1501 to 1510 (QSPSQATGAQ). Low complexity-rich tracts occupy residues 1523–1534 (QRYLQQQQQQQQ) and 1545–1562 (VQQPQGSSVSSSPQNSPQ). A compositionally biased stretch (pro residues) spans 1563–1579 (TQPPVSPQPLSMPPVSP). Polar residues-rich tracts occupy residues 1582–1595 (NINAMAQQKPQKSQ), 1604–1618 (SPQSGTSGVNNQAGK), 1635–1644 (RQPTQGQQLN), 1691–1722 (DQQSSVGTTTSTNLQSKPFVSPLSSNHSQQLP), and 1734–1758 (QQQMQLHSDNSIQGQSSPATPCNIL). Residues 1759 to 1768 (STSSPSIAPA) show a composition bias toward low complexity. The span at 1805–1815 (LSKKSQAERMP) shows a compositional bias: basic and acidic residues. Polar residues-rich tracts occupy residues 1819 to 1832 (QSVTNTTQTVSMGT) and 1876 to 1894 (SSNTDSAGNDPVSTPNQGL). Composition is skewed to basic and acidic residues over residues 1913–1922 (SEEKRPKLPE) and 1932–1942 (LASEEQPHLEE).

This sequence belongs to the EAF1 family. As to quaternary structure, component of the NuA4 histone acetyltransferase complex. Interacts with ARP4 and SWC4, and (via HSA domain) with TAF14 and TAF14B. In terms of tissue distribution, expressed in leaves.

The protein localises to the nucleus. Its function is as follows. Component of the NuA4 histone acetyltransferase complex which is involved in transcriptional activation of selected genes principally by acetylation of nucleosomal histone H4 and H2A. The sequence is that of Chromatin modification-related protein EAF1 A (EAF1A) from Arabidopsis thaliana (Mouse-ear cress).